The chain runs to 270 residues: Ribonuclease HII (270 aa).

An RNase H type-2 domain is found at 28–222; it reads RQVAGADEAG…VSGRQGAPPR (195 aa). A divalent metal cation contacts are provided by aspartate 34, glutamate 35, and aspartate 128.

The protein belongs to the RNase HII family. Mn(2+) serves as cofactor. It depends on Mg(2+) as a cofactor.

The protein resides in the cytoplasm. It catalyses the reaction Endonucleolytic cleavage to 5'-phosphomonoester.. In terms of biological role, endonuclease that specifically degrades the RNA of RNA-DNA hybrids. This Salinispora tropica (strain ATCC BAA-916 / DSM 44818 / JCM 13857 / NBRC 105044 / CNB-440) protein is Ribonuclease HII.